A 293-amino-acid chain; its full sequence is Fructose-bisphosphate aldolase class 1 (293 aa).

Catalysis depends on Glu-176, which acts as the Proton acceptor. Lys-211 (schiff-base intermediate with dihydroxyacetone-P) is an active-site residue.

It belongs to the class I fructose-bisphosphate aldolase family.

It catalyses the reaction beta-D-fructose 1,6-bisphosphate = D-glyceraldehyde 3-phosphate + dihydroxyacetone phosphate. It functions in the pathway carbohydrate degradation; glycolysis; D-glyceraldehyde 3-phosphate and glycerone phosphate from D-glucose: step 4/4. The sequence is that of Fructose-bisphosphate aldolase class 1 from Porphyromonas gingivalis (strain ATCC 33277 / DSM 20709 / CIP 103683 / JCM 12257 / NCTC 11834 / 2561).